A 281-amino-acid chain; its full sequence is Arabinooligosaccharides transport system permease protein AraQ (281 aa).

6 helical membrane passes run 15-35 (LTLFFMMLSLLYLFPIFCLLL), 81-101 (LVLGLFTTVLTLFFSSMIGYG), 112-132 (IIFVLVLIIMMVPLEVMMLPL), 142-162 (IDSYTGVILPFIVSPVAVFFF), 185-205 (FGIFFRIMAPLMKPAFGAMII), and 247-267 (MLISGSVFAILPVIIIFLFFQ). The ABC transmembrane type-1 domain occupies 77–266 (FFNSLVLGLF…LPVIIIFLFF (190 aa)).

This sequence belongs to the binding-protein-dependent transport system permease family. MalFG subfamily. As to quaternary structure, the complex is composed of two ATP-binding proteins (MsmX), two transmembrane proteins (AraP and AraQ) and a solute-binding protein (AraN).

The protein localises to the cell membrane. Its function is as follows. Part of the ABC transporter complex AraNPQ involved in the uptake of arabinooligosaccharides. Transports alpha-1,5-arabinooligosaccharides, at least up to four L-arabinosyl units. Responsible for the translocation of the substrate across the membrane. In Bacillus subtilis (strain 168), this protein is Arabinooligosaccharides transport system permease protein AraQ.